The following is a 408-amino-acid chain: Arylacetamide deacetylase-like 3 (408 aa).

3 helical membrane passes run 2-22, 46-66, and 109-129; these read VVLA…GSLL, ILSC…KLGL, and SSIP…IGSL. The Involved in the stabilization of the negatively charged intermediate by the formation of the oxyanion hole motif lies at 120 to 122; sequence HGG. Ser-194 is a catalytic residue. Asn-321 is a glycosylation site (N-linked (GlcNAc...) asparagine). Active-site residues include Asp-348 and His-378.

This sequence belongs to the 'GDXG' lipolytic enzyme family.

The protein resides in the membrane. The sequence is that of Arylacetamide deacetylase-like 3 (Aadacl3) from Mus musculus (Mouse).